Reading from the N-terminus, the 296-residue chain is Nucleotide-binding protein RSc0403 (296 aa).

8–15 (GMSGSGKS) contributes to the ATP binding site. 57–60 (DIRS) contacts GTP. Residues 99–124 (TRRRHPLSIRNGRPDAGNPPSAAKGP) form a disordered region.

The protein belongs to the RapZ-like family.

Functionally, displays ATPase and GTPase activities. This Ralstonia nicotianae (strain ATCC BAA-1114 / GMI1000) (Ralstonia solanacearum) protein is Nucleotide-binding protein RSc0403.